The following is a 160-amino-acid chain: Putative pre-16S rRNA nuclease (160 aa).

Belongs to the YqgF nuclease family.

It localises to the cytoplasm. Could be a nuclease involved in processing of the 5'-end of pre-16S rRNA. The chain is Putative pre-16S rRNA nuclease from Jannaschia sp. (strain CCS1).